Reading from the N-terminus, the 523-residue chain is Dynein regulatory complex subunit 3 (523 aa).

LRR repeat units follow at residues 44–65 (DVLSLQLDFRNILRIDNLWQFE), 66–87 (NLRKLQLDNNIIEKIEGLENLA), 88–109 (HLVWLDLSFNNIETIEGLDTLV), 110–131 (NLEDLSLFNNRISKIDSLDALV), and 132–153 (KLQVLSLGNNRIDNMMNIIYLR). Residues 166–204 (NPISEAEDYKMFICAYLPDLMYLDYRRIDDHTKKLAEAK) enclose the LRRCT domain. Coiled-coil stretches lie at residues 208–242 (SIDELKHQENLMQAQLEDEQAQREELEKHKTAFVE) and 366–391 (MTLEMQLVEQLEETINMFERNIVDMV).

This sequence belongs to the DRC3 family. As to quaternary structure, component of the nexin-dynein regulatory complex (N-DRC). Interacts with DRC1. Interacts with TCTE1/DRC5. Interacts with DRC7.

It localises to the cytoplasm. It is found in the cytoskeleton. The protein localises to the cilium axoneme. The protein resides in the cell projection. Its subcellular location is the cilium. It localises to the flagellum axoneme. It is found in the flagellum. In terms of biological role, component of the nexin-dynein regulatory complex (N-DRC) a key regulator of ciliary/flagellar motility which maintains the alignment and integrity of the distal axoneme and regulates microtubule sliding in motile axonemes. In Homo sapiens (Human), this protein is Dynein regulatory complex subunit 3 (DRC3).